The primary structure comprises 173 residues: Alpha-crystallin A chain (173 aa).

Residue methionine 1 is modified to N-acetylmethionine. In terms of domain architecture, sHSP spans 52–164 (LFRSVLESGI…SDRPIPVARE (113 aa)). Residues histidine 100, glutamate 102, histidine 107, and histidine 154 each contribute to the Zn(2+) site. The interval 152 to 173 (TIHSDRPIPVAREEKPTSAPSS) is disordered. The segment covering 153-167 (IHSDRPIPVAREEKP) has biased composition (basic and acidic residues).

It belongs to the small heat shock protein (HSP20) family. Heteropolymer composed of three CRYAA and one CRYAB subunits. Inter-subunit bridging via zinc ions enhances stability, which is crucial as there is no protein turn over in the lens. Can also form homodimers and homotetramers (dimers of dimers) which serve as the building blocks of homooligomers. Within homooligomers, the zinc-binding motif is created from residues of 3 different molecules. His-100 and Glu-102 from one molecule are ligands of the zinc ion, and His-107 and His-154 residues from additional molecules complete the site with tetrahedral coordination geometry.

It localises to the cytoplasm. The protein resides in the nucleus. Its function is as follows. Contributes to the transparency and refractive index of the lens. May act as a chaperone, preventing aggregation of various proteins under a wide range of stress conditions. The protein is Alpha-crystallin A chain (CRYAA) of Alligator mississippiensis (American alligator).